The primary structure comprises 74 residues: Small ribosomal subunit protein bS18 (74 aa).

Belongs to the bacterial ribosomal protein bS18 family. Part of the 30S ribosomal subunit. Forms a tight heterodimer with protein bS6.

Its function is as follows. Binds as a heterodimer with protein bS6 to the central domain of the 16S rRNA, where it helps stabilize the platform of the 30S subunit. This is Small ribosomal subunit protein bS18 from Alkalilimnicola ehrlichii (strain ATCC BAA-1101 / DSM 17681 / MLHE-1).